The following is a 132-amino-acid chain: Phosphoribosyl-AMP cyclohydrolase (132 aa).

Asp79 contacts Mg(2+). Cys80 contacts Zn(2+). Mg(2+) is bound by residues Asp81 and Asp83. Zn(2+) contacts are provided by Cys100 and Cys107.

Belongs to the PRA-CH family. As to quaternary structure, homodimer. Mg(2+) serves as cofactor. Requires Zn(2+) as cofactor.

The protein resides in the cytoplasm. The catalysed reaction is 1-(5-phospho-beta-D-ribosyl)-5'-AMP + H2O = 1-(5-phospho-beta-D-ribosyl)-5-[(5-phospho-beta-D-ribosylamino)methylideneamino]imidazole-4-carboxamide. It participates in amino-acid biosynthesis; L-histidine biosynthesis; L-histidine from 5-phospho-alpha-D-ribose 1-diphosphate: step 3/9. Catalyzes the hydrolysis of the adenine ring of phosphoribosyl-AMP. The protein is Phosphoribosyl-AMP cyclohydrolase of Acidovorax ebreus (strain TPSY) (Diaphorobacter sp. (strain TPSY)).